A 400-amino-acid chain; its full sequence is Elongation factor Tu (400 aa).

Residues 10–208 enclose the tr-type G domain; sequence KPHMNVGTIG…AMDSYFPDPV (199 aa). A G1 region spans residues 19–26; it reads GHIDHGKT. 19–26 provides a ligand contact to GTP; sequence GHIDHGKT. Residue Thr26 coordinates Mg(2+). Positions 60 to 64 are G2; that stretch reads GITIN. Positions 81-84 are G3; that stretch reads DCPG. GTP contacts are provided by residues 81-85 and 136-139; these read DCPGH and NKVD. Positions 136–139 are G4; it reads NKVD. A G5 region spans residues 174-176; that stretch reads SAL.

It belongs to the TRAFAC class translation factor GTPase superfamily. Classic translation factor GTPase family. EF-Tu/EF-1A subfamily. Monomer.

The protein localises to the cytoplasm. It carries out the reaction GTP + H2O = GDP + phosphate + H(+). Its function is as follows. GTP hydrolase that promotes the GTP-dependent binding of aminoacyl-tRNA to the A-site of ribosomes during protein biosynthesis. The chain is Elongation factor Tu from Fervidobacterium nodosum (strain ATCC 35602 / DSM 5306 / Rt17-B1).